The chain runs to 301 residues: Dimethylsulfoniopropionate lyase (301 aa).

Residues Cys-111 and Cys-230 each act as proton donor/acceptor in the active site.

This sequence belongs to the aspartate/glutamate racemases family. ALMA1 subfamily. In terms of assembly, homotetramer.

It carries out the reaction S,S-dimethyl-beta-propiothetin = acrylate + dimethyl sulfide + H(+). In terms of biological role, mediates cleavage of dimethylsulfoniopropionate (DMSP) into dimethyl sulfide (DMS) and acrylate. DMS is the principal form by which sulfur is transported from oceans to the atmosphere and is a key component of the ocean sulfur cycle. The protein is Dimethylsulfoniopropionate lyase of Durusdinium sp. clade D (Symbiodinium sp. clade D).